Reading from the N-terminus, the 191-residue chain is Calcium and integrin-binding protein 1 (191 aa).

A lipid anchor (N-myristoyl glycine) is attached at Gly-2. EF-hand domains are found at residues 103–138 (TPDI…LTGE) and 148–183 (EMKQ…SPDF). 10 residues coordinate Ca(2+): Asp-116, Asp-118, Asp-120, Thr-122, Asp-127, Asp-161, Asp-163, Asp-165, Thr-167, and Glu-172.

Monomer. Interacts with the heterodimeric integrin alpha-IIb/beta3 (ITGA2B-ITGB3). Interacts with ITGA2B (via cytoplasmic domain); the interaction is direct and calcium-dependent. Interacts with the protein kinases PLK2/SNK and PRKDC (via the region immediately upstream of the kinase domain). Interacts with PLK3; the interaction inhibits PLK3 kinase activity. Interacts with PSEN2. Interacts (via C-terminus) with F8. Interacts with NBR1 (via C-terminus). Interacts with FEZ1 (via C-terminus). Interacts with UBR5 (via C-terminus); the interaction is sensitive to DNA damage, and may target CIB1 for ubiquitin-mediated degradation. Interacts with IFI6; the interaction is direct. Interacts with BCL2. Interacts with ITPR3; the interaction occurs in a calcium dependent manner. Interacts with PTK2/FAK1. Interacts with MAP3K5; the interaction inhibits MAP3K5 activation by phosphorylation, and its subsequent interaction with TRAF2. Interacts (via C-terminal region) with STMN2 (via the N-terminal region); the interaction is direct, occurs in a calcium-dependent manner and attenuates the STMN2-induced neurite outgrowth inhibition. Interacts with SPHK1, the interaction occurs in a calcium-dependent manner. Interacts with ITGA2B (via C-terminal cytoplasmic tail); the interaction occurs upon platelet aggregation and is stabilized/increased in a calcium and magnesium-dependent manner. Interacts with PAK1 (via N-terminal region); the interaction is direct and occurs in a calcium-dependent manner. Interacts with RAC3 (via C-terminal region); the interaction induces their association with the cytoskeleton upon alpha-IIb/beta3 integrin-mediated adhesion. Interacts with ITGA5 and ITGAV. Interacts with MYO1C. Interacts with ITGA2B (via C-terminal cytoplasmic tail region). Interacts (via C-terminal region) with PPP3R1; the interaction increases upon cardiomyocytes hypertrophy. Interacts with CACNA1C; the interaction increases upon cardiomyocytes hypertrophy. Interacts with TAS1R2 (via C-terminus); this interaction is independent of the myristoylation state of CIB1. Interacts and forms a complex with TMC6 and TMC8; the interaction stabilizes each component of the complex. As to expression, expressed in cardiomyocytes and neurons (at protein level). Expressed during early neural development.

It is found in the membrane. The protein localises to the cell membrane. It localises to the sarcolemma. The protein resides in the apical cell membrane. Its subcellular location is the cell projection. It is found in the ruffle membrane. The protein localises to the filopodium tip. It localises to the growth cone. The protein resides in the lamellipodium. Its subcellular location is the cytoplasm. It is found in the cytoskeleton. The protein localises to the microtubule organizing center. It localises to the centrosome. The protein resides in the perinuclear region. Its subcellular location is the nucleus. It is found in the neuron projection. The protein localises to the perikaryon. In terms of biological role, calcium-binding protein that plays a role in the regulation of numerous cellular processes, such as cell differentiation, cell division, cell proliferation, cell migration, thrombosis, angiogenesis, cardiac hypertrophy and apoptosis. Involved in bone marrow megakaryocyte differentiation by negatively regulating thrombopoietin-mediated signaling pathway. Participates in the endomitotic cell cycle of megakaryocyte, a form of mitosis in which both karyokinesis and cytokinesis are interrupted. Plays a role in integrin signaling by negatively regulating alpha-IIb/beta3 activation in thrombin-stimulated megakaryocytes preventing platelet aggregation. Up-regulates PTK2/FAK1 activity, and is also needed for the recruitment of PTK2/FAK1 to focal adhesions; it thus appears to play an important role in focal adhesion formation. Positively regulates cell migration on fibronectin in a CDC42-dependent manner, the effect being negatively regulated by PAK1. Functions as a negative regulator of stress activated MAP kinase (MAPK) signaling pathways. Down-regulates inositol 1,4,5-trisphosphate receptor-dependent calcium signaling. Involved in sphingosine kinase SPHK1 translocation to the plasma membrane in a N-myristoylation-dependent manner preventing TNF-alpha-induced apoptosis. Regulates serine/threonine-protein kinase PLK3 activity for proper completion of cell division progression. Plays a role in microtubule (MT) dynamics during neuronal development; disrupts the MT depolymerization activity of STMN2 attenuating NGF-induced neurite outgrowth and the MT reorganization at the edge of lamellipodia. Promotes cardiomyocyte hypertrophy via activation of the calcineurin/NFAT signaling pathway. Stimulates calcineurin PPP3R1 activity by mediating its anchoring to the sarcolemma. In ischemia-induced (pathological or adaptive) angiogenesis, stimulates endothelial cell proliferation, migration and microvessel formation by activating the PAK1 and ERK1/ERK2 signaling pathway. Also promotes cancer cell survival and proliferation. May regulate cell cycle and differentiation of spermatogenic germ cells, and/or differentiation of supporting Sertoli cells. Forms a complex with TMC6/EVER1 and TMC8/EVER2 in lymphocytes and keratynocytes where CIB1 stabilizes TMC6 and TMC8 levels and reciprocally. The polypeptide is Calcium and integrin-binding protein 1 (Cib1) (Rattus norvegicus (Rat)).